A 664-amino-acid chain; its full sequence is Macrolide export ATP-binding/permease protein MacB (664 aa).

The 238-residue stretch at 8 to 245 (LELVDVHRTY…AGPSVPLTLD (238 aa)) folds into the ABC transporter domain. An ATP-binding site is contributed by 44–51 (GSSGSGKS). Helical transmembrane passes span 283–303 (LLSVLGILVGVASVIAMMALG), 543–563 (GAIAAISLLVGGIGIMNIMLV), 602–622 (IIGIIAGIGISALLAVFAGWA), and 627–647 (IVSIVLATFFSAITGIFFGLW).

The protein belongs to the ABC transporter superfamily. Macrolide exporter (TC 3.A.1.122) family. In terms of assembly, homodimer.

It is found in the cell inner membrane. Its function is as follows. Non-canonical ABC transporter that contains transmembrane domains (TMD), which form a pore in the inner membrane, and an ATP-binding domain (NBD), which is responsible for energy generation. Confers resistance against macrolides. The chain is Macrolide export ATP-binding/permease protein MacB from Chlorobium luteolum (strain DSM 273 / BCRC 81028 / 2530) (Pelodictyon luteolum).